We begin with the raw amino-acid sequence, 370 residues long: tRNA-specific 2-thiouridylase MnmA (370 aa).

Residues 24 to 31 (AMSGGVDS) and leucine 50 each bind ATP. The Nucleophile role is filled by cysteine 119. A disulfide bridge connects residues cysteine 119 and cysteine 215. ATP is bound at residue glycine 143. The segment at 165 to 167 (KDQ) is interaction with tRNA. Cysteine 215 acts as the Cysteine persulfide intermediate in catalysis.

This sequence belongs to the MnmA/TRMU family.

The protein localises to the cytoplasm. The catalysed reaction is S-sulfanyl-L-cysteinyl-[protein] + uridine(34) in tRNA + AH2 + ATP = 2-thiouridine(34) in tRNA + L-cysteinyl-[protein] + A + AMP + diphosphate + H(+). Catalyzes the 2-thiolation of uridine at the wobble position (U34) of tRNA, leading to the formation of s(2)U34. This is tRNA-specific 2-thiouridylase MnmA from Wolbachia sp. subsp. Drosophila simulans (strain wRi).